Reading from the N-terminus, the 243-residue chain is Small ribosomal subunit protein uS3 (243 aa).

A KH type-2 domain is found at 38–106 (IRKYLNARLA…DIQINIFEVK (69 aa)). The tract at residues 214–243 (PNFTQSKESGRGNNGGNNGGKNFKRKKNNR) is disordered.

The protein belongs to the universal ribosomal protein uS3 family. Part of the 30S ribosomal subunit. Forms a tight complex with proteins S10 and S14.

Its function is as follows. Binds the lower part of the 30S subunit head. Binds mRNA in the 70S ribosome, positioning it for translation. This Bacteroides thetaiotaomicron (strain ATCC 29148 / DSM 2079 / JCM 5827 / CCUG 10774 / NCTC 10582 / VPI-5482 / E50) protein is Small ribosomal subunit protein uS3.